A 650-amino-acid chain; its full sequence is Epithelial sodium channel subunit gamma (650 aa).

Residues 1–55 are Cytoplasmic-facing; it reads MAPGEKIKAKIKKNLPVRGPQAPTIKDLMHWYCMNTNTHGCRRIVVSRGRLRRLL. The helical transmembrane segment at 56-76 threads the bilayer; sequence WIAFTLTAVALIIWQCALLVF. Residues 77–542 are Extracellular-facing; it reads SFYTVSVSIK…GGQLGLWMSC (466 aa). 8 disulfides stabilise this stretch: cysteine 100–cysteine 284, cysteine 208–cysteine 215, cysteine 261–cysteine 268, cysteine 373–cysteine 458, cysteine 395–cysteine 454, cysteine 399–cysteine 450, cysteine 408–cysteine 435, and cysteine 410–cysteine 424. The gating release of inhibition by proteolysis (GRIP); protease-sensitive region that is responsible for the proteolytic activation of the channel stretch occupies residues 135 to 222; the sequence is RKRREAGSMP…SDCATYTFSS (88 aa). Asparagine 210 carries an N-linked (GlcNAc...) asparagine glycan. Asparagine 272 carries an N-linked (GlcNAc...) asparagine glycan. A glycan (N-linked (GlcNAc...) asparagine) is linked at asparagine 498. Residues 543-563 traverse the membrane as a helical segment; sequence SVVCVIEIIEVFFIDFFSIIA. Over 564-650 the chain is Cytoplasmic; that stretch reads RRQWHKAKDW…LTDTQLTNEL (87 aa). Positions 577-628 are disordered; sequence RQTPPSTETPSSRQGQDNPALDTDDDLPTFTSAMRLPPAPGSTVPGTPPPRY. Positions 579-593 are enriched in polar residues; that stretch reads TPPSTETPSSRQGQD. The short motif at 624-628 is the PY motif; mediates interaction, ubiquitination and inhibition by NEDD4 and NEDD4L element; sequence PPPRY. Residues 624-628 carry the PY motif; recruits WW domain-containing proteins and is thereby required for ubiquitination and inhibition of the channel by NEDD4 and NEDD4L motif; it reads PPPRY.

Belongs to the amiloride-sensitive sodium channel (TC 1.A.6) family. SCNN1G subfamily. In terms of assembly, component of the heterotrimeric epithelial sodium channel (ENaC) composed of an alpha/SCNN1A, a beta/SCNN1B and a gamma/SCNN1G subunit. Interacts with WWP1 (via WW domains). Interacts with WWP2 (via WW domains); inhibits the channel. Interacts with the full-length immature form of PCSK9 (pro-PCSK9); inhibits ENaC by promoting its proteasomal degradation. Interacts with BPIFA1; the interaction is indirect via SCNN1B and inhibits the proteolytic maturation of SCNN1A and SCNN1G and the activation of ENaC. In terms of processing, phosphorylated on serine and threonine residues. Aldosterone and insulin increase the basal level of phosphorylation. Ubiquitinated. Can be ubiquitinated at multiple sites and undergo monoubiquitination and polyubiquitination. Ubiquitination by NEDD4 or NEDD4L inhibits the ENaC channel through endocytosis, intracellular retention and degradation of its individual subunits. Post-translationally, ENaC is activated through the proteolytic maturation of its subunits. Furin cleaves the SCNN1G subunit first, followed by cleavage by prostasin (PRSS8), which results in a stepwise increase in the open probability of the channel due to the release of an inhibitory tract. BPIFA1, which is recruited by the SCNN1B subunit, prevents the proteolytic activation of ENaC. In terms of processing, N-glycosylated. N-linked glycans are processed to complex type during ENaC complex assembly and transport to the plasma membrane.

It localises to the apical cell membrane. The enzyme catalyses Na(+)(in) = Na(+)(out). With respect to regulation, originally identified and characterized by its inhibition by the diuretic drug amiloride. Its function is as follows. This is one of the three pore-forming subunits of the heterotrimeric epithelial sodium channel (ENaC), a critical regulator of sodium balance and fluid homeostasis. ENaC operates in epithelial tissues, where it mediates the electrodiffusion of sodium ions from extracellular fluid through the apical membrane of cells, with water following osmotically. It plays a key role in maintaining sodium homeostasis through electrogenic sodium reabsorption in the kidneys. Additionally, ENaC is essential for airway surface liquid homeostasis, which is crucial for proper mucus clearance. This is Epithelial sodium channel subunit gamma from Rattus norvegicus (Rat).